Reading from the N-terminus, the 305-residue chain is Homoserine O-acetyltransferase (305 aa).

The active-site Acyl-thioester intermediate is the cysteine 142. Residues lysine 163 and serine 192 each contribute to the substrate site. The active-site Proton acceptor is histidine 235. Residue glutamate 237 is part of the active site. Residue arginine 249 participates in substrate binding.

It belongs to the MetA family.

It is found in the cytoplasm. It catalyses the reaction L-homoserine + acetyl-CoA = O-acetyl-L-homoserine + CoA. It participates in amino-acid biosynthesis; L-methionine biosynthesis via de novo pathway; O-acetyl-L-homoserine from L-homoserine: step 1/1. Its function is as follows. Transfers an acetyl group from acetyl-CoA to L-homoserine, forming acetyl-L-homoserine. This is Homoserine O-acetyltransferase from Acetivibrio thermocellus (strain ATCC 27405 / DSM 1237 / JCM 9322 / NBRC 103400 / NCIMB 10682 / NRRL B-4536 / VPI 7372) (Clostridium thermocellum).